We begin with the raw amino-acid sequence, 83 residues long: Protein MATERNALLY EXPRESSED GENE 3 (83 aa).

Residues 1-22 form the signal peptide; it reads MQWLAFVAPRWRCVCDQELSAQ. Cysteines 60 and 82 form a disulfide.

This sequence belongs to the MEG family. As to expression, expressed in endosperm, anther and pollen.

This is Protein MATERNALLY EXPRESSED GENE 3 (MEG3) from Zea mays (Maize).